A 65-amino-acid polypeptide reads, in one-letter code: Large ribosomal subunit protein bL35 (65 aa).

The interval 1–52 (MPKMKSNRAAAKRFKRTANGGFKSGNSFTSHRFHGKTKKQRRQLRGLSMMDK) is disordered. Basic residues predominate over residues 31–44 (HRFHGKTKKQRRQL).

It belongs to the bacterial ribosomal protein bL35 family.

The protein is Large ribosomal subunit protein bL35 of Limosilactobacillus reuteri (strain DSM 20016) (Lactobacillus reuteri).